Consider the following 277-residue polypeptide: MAVYATGDLQGCLEPLKCLLDRVAFEPGRDRLWLTGDLVNRGPQSLETLRFIHGMRDSVTTVLGNHDLHLLAVAHDIERLKKSDTLREILEAPDRDLLLDWLRWQKLLHHDGERGIVLVHAGIPPQWSLKKALRLAAEVEEALRDDSRLPQFLDGMYGNDPLRWNGRLRGTARLRAITNYFTRMRFCTADGTLDLKSKEGLGSAPSGFTPWFSHPRRKTRGQKILFGHWAALEGHCDEPGVIALDTGCVWGGALTLLNLDTGEYHRCACDGAKGDAG.

Belongs to the Ap4A hydrolase family.

The enzyme catalyses P(1),P(4)-bis(5'-adenosyl) tetraphosphate + H2O = 2 ADP + 2 H(+). Its function is as follows. Hydrolyzes diadenosine 5',5'''-P1,P4-tetraphosphate to yield ADP. This chain is Bis(5'-nucleosyl)-tetraphosphatase, symmetrical, found in Azotobacter vinelandii (strain DJ / ATCC BAA-1303).